An 84-amino-acid polypeptide reads, in one-letter code: U1-theraphotoxin-Hs1a (84 aa).

An N-terminal signal peptide occupies residues 1-22; sequence MKVTLIAILTCAAVLVLHTTAA. Residues 23 to 48 constitute a propeptide that is removed on maturation; the sequence is EELEESQLMEVGMPDTELAAVDEERL. 3 cysteine pairs are disulfide-bonded: cysteine 51–cysteine 65, cysteine 55–cysteine 76, and cysteine 70–cysteine 81.

Belongs to the neurotoxin 12 (Hwtx-2) family. 02 (Hwtx-2) subfamily. Expressed by the venom gland.

Its subcellular location is the secreted. Functionally, blocks neuromuscular transmission. Acts cooperatively to potentiate the activity of huwentoxin-I. Paralyzes locusts and kills mice following intracerebroventricular injection. The polypeptide is U1-theraphotoxin-Hs1a (Cyriopagopus schmidti (Chinese bird spider)).